The following is an 886-amino-acid chain: Alanine--tRNA ligase (886 aa).

Zn(2+) contacts are provided by His570, His574, Cys673, and His677.

This sequence belongs to the class-II aminoacyl-tRNA synthetase family. Zn(2+) is required as a cofactor.

It is found in the cytoplasm. It carries out the reaction tRNA(Ala) + L-alanine + ATP = L-alanyl-tRNA(Ala) + AMP + diphosphate. In terms of biological role, catalyzes the attachment of alanine to tRNA(Ala) in a two-step reaction: alanine is first activated by ATP to form Ala-AMP and then transferred to the acceptor end of tRNA(Ala). Also edits incorrectly charged Ser-tRNA(Ala) and Gly-tRNA(Ala) via its editing domain. The chain is Alanine--tRNA ligase from Chlorobium chlorochromatii (strain CaD3).